The following is a 326-amino-acid chain: MPNSTAQYPEKDSWEFLVKSGIAGGTAGCVAKSVVAPLDRVKILYQTNHASYRGYAYSRHGLYKAIKHIYHVYGLHGLYQGHTATLYRVFPYAGIKFVAYEQVRRVLIRDPEHETHARRFLSGSLAGTCSVFFTYPLELIRVRLAYITNTGKNPTLTQVTKDIFHERDFLCNKKYPGLSRLSKICNFYRGFSVTLTGIFPYAGMSFLAYDLATDFFHKQKIDEWVSTKKSDKKLKTWPELLCGAFAGVCGQTVSYPFEVCRRKMQIGGIRKNKSFLRLKQVVQTTYKEAGMRGFFVGLTIGYIKVIPMVSTSFFVYNHSKALLGID.

Solcar repeat units follow at residues 15–106 (EFLV…VRRV), 114–215 (ETHA…ATDF), and 234–322 (LKTW…SKAL). 6 helical membrane passes run 16–36 (FLVKSGIAGGTAGCVAKSVVA), 83–103 (TATLYRVFPYAGIKFVAYEQV), 120–140 (FLSGSLAGTCSVFFTYPLELI), 191–211 (FSVTLTGIFPYAGMSFLAYDL), 240–260 (LLCGAFAGVCGQTVSYPFEVC), and 294–314 (FFVGLTIGYIKVIPMVSTSFF).

This sequence belongs to the mitochondrial carrier (TC 2.A.29) family.

Its subcellular location is the mitochondrion inner membrane. This is an uncharacterized protein from Schizosaccharomyces pombe (strain 972 / ATCC 24843) (Fission yeast).